The primary structure comprises 363 residues: NADH-quinone oxidoreductase subunit H (363 aa).

The next 10 membrane-spanning stretches (helical) occupy residues 29–49, 62–82, 96–116, 127–147, 163–183, 202–222, 238–257, 264–286, 299–319, and 339–359; these read VLKI…YVVW, GPMY…KLLF, FIIA…VVPF, VGLL…ILAG, AAQV…VMIA, FFDW…VSGV, EIVA…LFFL, ILVS…QGWV, KGGW…YIWF, and FIPL…YGVI.

It belongs to the complex I subunit 1 family. In terms of assembly, NDH-1 is composed of 14 different subunits. Subunits NuoA, H, J, K, L, M, N constitute the membrane sector of the complex.

The protein localises to the cell inner membrane. The catalysed reaction is a quinone + NADH + 5 H(+)(in) = a quinol + NAD(+) + 4 H(+)(out). In terms of biological role, NDH-1 shuttles electrons from NADH, via FMN and iron-sulfur (Fe-S) centers, to quinones in the respiratory chain. The immediate electron acceptor for the enzyme in this species is believed to be ubiquinone. Couples the redox reaction to proton translocation (for every two electrons transferred, four hydrogen ions are translocated across the cytoplasmic membrane), and thus conserves the redox energy in a proton gradient. This subunit may bind ubiquinone. In Xanthomonas oryzae pv. oryzae (strain PXO99A), this protein is NADH-quinone oxidoreductase subunit H.